A 330-amino-acid polypeptide reads, in one-letter code: D-lactate dehydrogenase (330 aa).

NAD(+)-binding positions include 155-156 (RI), Asp-175, 206-207 (MP), Asn-212, 233-235 (MAR), and Asp-259. Arg-235 is an active-site residue. Glu-264 is a catalytic residue. Residue His-296 is the Proton donor of the active site.

It belongs to the D-isomer specific 2-hydroxyacid dehydrogenase family.

It carries out the reaction (R)-lactate + NAD(+) = pyruvate + NADH + H(+). This is D-lactate dehydrogenase (ldhD) from Streptococcus agalactiae serotype V (strain ATCC BAA-611 / 2603 V/R).